The sequence spans 445 residues: Putative serpin-Z5 (445 aa).

An RCL region spans residues Gly356 to Pro380.

Belongs to the serpin family.

In terms of biological role, probable serine protease inhibitor. This chain is Putative serpin-Z5, found in Oryza sativa subsp. japonica (Rice).